Here is a 192-residue protein sequence, read N- to C-terminus: ATP synthase protein MI25 (192 aa).

A helical membrane pass occupies residues 29–49 (ISIYNEEMIVARCFIGFLIFS).

It belongs to the ATPase protein MI25 family. In terms of assembly, F-type ATPases have 2 components, CF(1) - the catalytic core - and CF(0) - the membrane proton channel. CF(1) has five subunits: alpha(3), beta(3), gamma(1), delta(1), epsilon(1). CF(0) has three main subunits: a, b and c.

Its subcellular location is the mitochondrion membrane. Functionally, this is one of the chains of the nonenzymatic component (CF(0) subunit) of the mitochondrial ATPase complex. This is ATP synthase protein MI25 from Triticum timopheevii (Timopheev's wheat).